The primary structure comprises 365 residues: Peptidyl-prolyl cis-trans isomerase FKBP42 (365 aa).

The span at 1–15 shows a compositional bias: basic and acidic residues; sequence MDESLEHQTQTHDQE. Residues 1-44 are disordered; it reads MDESLEHQTQTHDQESEIVTEGSAVVHSEPSQEGNVPPKVDSEA. Residues 1-163 form an interaction with MDR1/PGP1 region; the sequence is MDESLEHQTQ…EVIGFDETKE (163 aa). In terms of domain architecture, PPIase FKBP-type spans 67–159; the sequence is YSTCFLHYRA…LYEVEVIGFD (93 aa). Positions 163–337 are interaction with MRP1; it reads EGKARSDMTV…GKDEGGAKSK (175 aa). TPR repeat units follow at residues 179–212, 230–263, and 264–297; these read ADRR…MGDD, NPCH…EEKN, and PKAL…APDD. The segment at 310–326 is calmodulin-binding; that stretch reads QEKALYQKQKEMYKGIF. Residues 338–357 traverse the membrane as a helical; Anchor for type IV membrane protein segment; that stretch reads SLFWLIVLWQWFVSLFSRIF.

It belongs to the FKBP-type PPIase family. In terms of assembly, interacts with calmodulin (CaM), MRP1, MRP2, MDR1/PGP1, MDR11/PGP19 and SHD/HSP90. Interacts with 1-naphthylphthalamic acid (NPA).

It localises to the cell membrane. The protein localises to the vacuole membrane. The protein resides in the endoplasmic reticulum. The catalysed reaction is [protein]-peptidylproline (omega=180) = [protein]-peptidylproline (omega=0). Functionally, PPIases accelerate the folding of proteins. It catalyzes the cis-trans isomerization of proline imidic peptide bonds in oligopeptides. Modulates the uptake of MRP substrates into the vacuole; reduces metolachlor-GS (MOC-GS) and enhances 17-beta-estradiol 17-(beta-D-glucuronide) (E(2)17betaG) uptake. Regulates cell elongation and orientation. Functions as a positive regulator of PGP1-mediated auxin transport. Confers drug modulation of PGP1 efflux activity as interaction with NPA or flavonol quercetin prevents its physical and functional interaction with PGP1. Required for the proper localization of auxin-related ABCB transporters. Plays a role in brassinosteroid (BR) signaling pathway. Required for seed development by promoting stamen elongation and, to a lesser extent, anther dehiscence and pollen maturation, probably as a chaperone helping ABCB1 and ABCB19 auxin transporters localization and activation. Involved in auxin signaling in nectaries to promote starch accumulation to attract visiting pollinators. This chain is Peptidyl-prolyl cis-trans isomerase FKBP42, found in Arabidopsis thaliana (Mouse-ear cress).